The sequence spans 87 residues: Exodeoxyribonuclease 7 small subunit (87 aa).

The protein belongs to the XseB family. Heterooligomer composed of large and small subunits.

The protein resides in the cytoplasm. The catalysed reaction is Exonucleolytic cleavage in either 5'- to 3'- or 3'- to 5'-direction to yield nucleoside 5'-phosphates.. In terms of biological role, bidirectionally degrades single-stranded DNA into large acid-insoluble oligonucleotides, which are then degraded further into small acid-soluble oligonucleotides. The chain is Exodeoxyribonuclease 7 small subunit from Serratia proteamaculans (strain 568).